The chain runs to 209 residues: Probable GTP-binding protein EngB (209 aa).

The EngB-type G domain occupies 23-198 (NGAEIAFAGR…EKVVAGWLVP (176 aa)). GTP is bound by residues 31-38 (GRSNAGKS), 58-62 (GRTQL), 76-79 (DLPG), 143-146 (TKSD), and 177-179 (FSS). Positions 38 and 60 each coordinate Mg(2+).

The protein belongs to the TRAFAC class TrmE-Era-EngA-EngB-Septin-like GTPase superfamily. EngB GTPase family. The cofactor is Mg(2+).

Necessary for normal cell division and for the maintenance of normal septation. The chain is Probable GTP-binding protein EngB from Azoarcus sp. (strain BH72).